Here is a 49-residue protein sequence, read N- to C-terminus: Large ribosomal subunit protein bL33B (49 aa).

This sequence belongs to the bacterial ribosomal protein bL33 family.

In Bacillus pumilus (strain SAFR-032), this protein is Large ribosomal subunit protein bL33B.